Consider the following 162-residue polypeptide: NADH-quinone oxidoreductase subunit I (162 aa).

4Fe-4S ferredoxin-type domains are found at residues 52–82 (LRRYPNGEERCIACKLCEAICPAQAITIEAG) and 93–122 (TRYDIDMVKCIYCGFCQEACPVDAIVEGPN). [4Fe-4S] cluster contacts are provided by Cys62, Cys65, Cys68, Cys72, Cys102, Cys105, Cys108, and Cys112.

It belongs to the complex I 23 kDa subunit family. In terms of assembly, NDH-1 is composed of 14 different subunits. Subunits NuoA, H, J, K, L, M, N constitute the membrane sector of the complex. It depends on [4Fe-4S] cluster as a cofactor.

The protein resides in the cell inner membrane. The catalysed reaction is a quinone + NADH + 5 H(+)(in) = a quinol + NAD(+) + 4 H(+)(out). NDH-1 shuttles electrons from NADH, via FMN and iron-sulfur (Fe-S) centers, to quinones in the respiratory chain. The immediate electron acceptor for the enzyme in this species is believed to be ubiquinone. Couples the redox reaction to proton translocation (for every two electrons transferred, four hydrogen ions are translocated across the cytoplasmic membrane), and thus conserves the redox energy in a proton gradient. In Azorhizobium caulinodans (strain ATCC 43989 / DSM 5975 / JCM 20966 / LMG 6465 / NBRC 14845 / NCIMB 13405 / ORS 571), this protein is NADH-quinone oxidoreductase subunit I.